A 341-amino-acid chain; its full sequence is MRDHVEFCYYVIIYSLEKFQQRSKQFGISLFIFFLATAAVTVIVPTLLGVSQRGFFCDDDSIRYEYRKDTITAVQLMLYNLVLNAATVLFVEYYRMQKVESNINNPRYRWRNNHLHVLFVRLLTYFGYSQIGFVMNIALNIVTKHVVGRLRPHFLDVCKLANDTCVTGDSHRYITDYTCTGPPELVLEARKSFYSGHSAVSLYCATWSALYIQARLGPVLNNRIVVPISQTLMFMIGLGISFSRITDNKHHWSDVLVGIFIGIFLAVYTCTFWTDLFSNNSTESETQPLLLPRPPRTPRNSEDEERHRLDAVLPSTDSSIVFEATGPQDSDTILLPVPQSA.

Helical transmembrane passes span 30–50 (LFIFFLATAAVTVIVPTLLGV), 71–91 (ITAVQLMLYNLVLNAATVLFV), and 122–142 (LLTYFGYSQIGFVMNIALNIV). Asn-162 carries an N-linked (GlcNAc...) asparagine glycan. 2 helical membrane-spanning segments follow: residues 223 to 243 (RIVVPISQTLMFMIGLGISFS) and 257 to 277 (VGIFIGIFLAVYTCTFWTDLF). Disordered stretches follow at residues 284-308 (SETQPLLLPRPPRTPRNSEDEERHR) and 322-341 (FEATGPQDSDTILLPVPQSA). A compositionally biased stretch (basic and acidic residues) spans 299–308 (RNSEDEERHR).

It belongs to the PA-phosphatase related phosphoesterase family.

Its subcellular location is the membrane. This is Phospholipid phosphatase homolog 1.2 homolog from Caenorhabditis elegans.